We begin with the raw amino-acid sequence, 480 residues long: Protein transport protein SEC61 (480 aa).

The Cytoplasmic portion of the chain corresponds to 1–32 (MSSNRVLDLFKPFESFLPEVIAPERKVPYNQK). The helical transmembrane segment at 33–55 (LIWTGVSLLIFLILGQIPLYGIV) threads the bilayer. Topologically, residues 56 to 75 (SSETSDPLYWLRAMLASNRG) are lumenal. Residues 76–95 (TLLELGVSPIITSSMIFQFL) traverse the membrane as a helical segment. Over 96 to 119 (QGTQLLQIRPESKQDRELFQIAQK) the chain is Cytoplasmic. Residues 120 to 141 (VCAIILILGQALVVVMTGNYGA) traverse the membrane as a helical segment. Residues 142–146 (PSDLG) are Lumenal-facing. Residues 147-167 (LPICLLLIFQLMFASLIVMLL) traverse the membrane as a helical segment. Residues 168 to 212 (DELLSKGYGLGSGISLFTATNIAEQIFWRAFAPTTVNSGRGKEFE) are Cytoplasmic-facing. The helical transmembrane segment at 213 to 224 (GAVIAFFHLLAV) threads the bilayer. The Lumenal portion of the chain corresponds to 225 to 240 (RKDKKRALVEAFYRTN). The helical transmembrane segment at 241–260 (LPNMFQVLMTVAIFLFVLYL) threads the bilayer. Residues 261–290 (QGFRYELPIRSTKVRGQIGIYPIKLFYTSN) are Cytoplasmic-facing. A helical membrane pass occupies residues 291–311 (TPIMLQSALTSNIFLISQILF). The Lumenal segment spans residues 312-361 (QKYPTNPLIRLIGVWGIRPGTQGPQMALSGLAYYIQPLMSLSEALLDPIK). The chain crosses the membrane as a helical span at residues 362-381 (TIVYITFVLGSCAVFSKTWI). The Cytoplasmic portion of the chain corresponds to 382 to 416 (EISGTSPRDIAKQFKDQGMVINGKRETSIYRELKK). Residues 417-434 (IIPTAAAFGGATIGALSV) traverse the membrane as a helical segment. The Lumenal portion of the chain corresponds to 435 to 437 (GSD). Residues 438 to 459 (LLGTLGSGASILMATTTIYGYY) traverse the membrane as a helical segment. The Cytoplasmic segment spans residues 460 to 480 (EAAAKEGGFTKNLVPGFSDLM).

Belongs to the SecY/SEC61-alpha family. As to quaternary structure, component of the heterotrimeric Sec61 complex, which is composed of SEC61, SBH1 and SSS1. Presumably three to four Sec61 heterotrimers assemble into an oligomeric ring with a central aqueous pore. In cotranslational ER import, the pore diameter varies from 9-15 A in a ribosome-free resting state to 40-60 A in a functional state when associated with the ribosome. The Sec61 complex is part of a channel-forming translocon complex whose composition seem to change dependent upon different functional states. During post-translational ER import the Sec61 complex associates with the Sec62/63 complex to form the Sec complex. SEC61 interacts with STT3, OST1, OST2, OST4, SWP1 and WBP1 components of the OT complex.

The protein resides in the endoplasmic reticulum membrane. Its function is as follows. Part of the Sec61 complex, which is the major component of a channel-forming translocon complex that mediates protein translocation across the endoplasmic reticulum (ER). The functional states of the translocon complex include co- and post-translational ER import, cotranslational membrane protein integration and retrograde transport of misfolded proteins out of the ER. In the cotranslational pathway, ribosomes synthesizing presecretory proteins are targeted to the translocon by the cytosolic signal recognition particle (SRP) and its ER-localized receptor. The association of the Sec61 complex with the ribosome is mediated by the 28S rRNA of the large ribosomal subunit. SRP-independent post-translational translocation requires the association of additional factors, such as the Sec62/63 complex and KAR2. In an initial step, the signal sequence seems to bind simultaneously to SEC61 and SEC62. A cycle of assembly and disassembly of Sec62/63 complex from SEC61 may govern the activity of the translocon. SEC61 mediates the association with the ribosome. The polypeptide is Protein transport protein SEC61 (SEC61) (Saccharomyces cerevisiae (strain ATCC 204508 / S288c) (Baker's yeast)).